The primary structure comprises 155 residues: Small ribosomal subunit protein uS7 (155 aa).

It belongs to the universal ribosomal protein uS7 family. Part of the 30S ribosomal subunit. Contacts proteins S9 and S11.

Its function is as follows. One of the primary rRNA binding proteins, it binds directly to 16S rRNA where it nucleates assembly of the head domain of the 30S subunit. Is located at the subunit interface close to the decoding center, probably blocks exit of the E-site tRNA. This is Small ribosomal subunit protein uS7 from Mycoplasma genitalium (strain ATCC 33530 / DSM 19775 / NCTC 10195 / G37) (Mycoplasmoides genitalium).